The sequence spans 364 residues: Flavonoid 3'-O-methyltransferase 3 (364 aa).

D232 provides a ligand contact to S-adenosyl-L-methionine. H270 serves as the catalytic Proton acceptor.

This sequence belongs to the class I-like SAM-binding methyltransferase superfamily. Cation-independent O-methyltransferase family. As to quaternary structure, homodimer.

The catalysed reaction is quercetin + S-adenosyl-L-methionine = isorhamnetin + S-adenosyl-L-homocysteine + H(+). The enzyme catalyses luteolin + S-adenosyl-L-methionine = chrysoeriol + S-adenosyl-L-homocysteine + H(+). It catalyses the reaction a 3'-hydroxyflavone + S-adenosyl-L-methionine = a 3'-methoxyflavone + S-adenosyl-L-homocysteine + H(+). It carries out the reaction rhamnetin + S-adenosyl-L-methionine = rhamnacene + S-adenosyl-L-homocysteine + H(+). The catalysed reaction is 3',4',7,8-tetrahydroxyflavone + S-adenosyl-L-methionine = 4',7,8-trihydroxy-3'-methoxyflavone-7-olate + S-adenosyl-L-homocysteine + H(+). The enzyme catalyses taxifolin + S-adenosyl-L-methionine = taxifolin 3'-methyl ether + S-adenosyl-L-homocysteine + H(+). It participates in flavonoid metabolism. Flavonoid 3'-O-methyltransferase involved in the biosynthesis of polymethoxylated flavonoids natural products such as pebrellin, aroma compounds which contribute to the flavor of peppermint, and exhibit pharmacological activities such as anti-allergic, anti-oxidant, antibacterial, anti-proliferative, and anti-inflammatory effects. Catalyzes S-adenosylmethionine-dependent regioselective 3'-O-methylation of flavonoids; active on various hydroxylated flavonoid substrates, including quercetin, rhamnetin, luteolin (LUT), 7,8,3'4'-tetrahydroxy-flavone and taxifolin, and, with a lower efficiency, eupatorin and hesperetin. The polypeptide is Flavonoid 3'-O-methyltransferase 3 (Mentha piperita (Peppermint)).